Consider the following 162-residue polypeptide: 6,7-dimethyl-8-ribityllumazine synthase (162 aa).

5-amino-6-(D-ribitylamino)uracil is bound by residues Phe23, 61-63 (AYE), and 85-87 (AVI). 90-91 (DT) is a binding site for (2S)-2-hydroxy-3-oxobutyl phosphate. His93 functions as the Proton donor in the catalytic mechanism. Phe118 serves as a coordination point for 5-amino-6-(D-ribitylamino)uracil. Residue Arg132 coordinates (2S)-2-hydroxy-3-oxobutyl phosphate.

Belongs to the DMRL synthase family.

The catalysed reaction is (2S)-2-hydroxy-3-oxobutyl phosphate + 5-amino-6-(D-ribitylamino)uracil = 6,7-dimethyl-8-(1-D-ribityl)lumazine + phosphate + 2 H2O + H(+). The protein operates within cofactor biosynthesis; riboflavin biosynthesis; riboflavin from 2-hydroxy-3-oxobutyl phosphate and 5-amino-6-(D-ribitylamino)uracil: step 1/2. Catalyzes the formation of 6,7-dimethyl-8-ribityllumazine by condensation of 5-amino-6-(D-ribitylamino)uracil with 3,4-dihydroxy-2-butanone 4-phosphate. This is the penultimate step in the biosynthesis of riboflavin. The chain is 6,7-dimethyl-8-ribityllumazine synthase from Synechococcus sp. (strain CC9902).